Consider the following 338-residue polypeptide: Holliday junction branch migration complex subunit RuvB (338 aa).

The tract at residues 4–184 (ADRLMSAAAV…FGIVQRLEFY (181 aa)) is large ATPase domain (RuvB-L). Residues isoleucine 23, arginine 24, glycine 65, lysine 68, threonine 69, threonine 70, 131 to 133 (EDY), arginine 174, tyrosine 184, and arginine 221 each bind ATP. Mg(2+) is bound at residue threonine 69. The segment at 185–255 (QTGDLQHIVS…VAVSALNMLN (71 aa)) is small ATPAse domain (RuvB-S). The tract at residues 258-338 (TEGFDFMDRK…GLEEHGGDPE (81 aa)) is head domain (RuvB-H). The DNA site is built by arginine 294, arginine 313, and arginine 318.

The protein belongs to the RuvB family. Homohexamer. Forms an RuvA(8)-RuvB(12)-Holliday junction (HJ) complex. HJ DNA is sandwiched between 2 RuvA tetramers; dsDNA enters through RuvA and exits via RuvB. An RuvB hexamer assembles on each DNA strand where it exits the tetramer. Each RuvB hexamer is contacted by two RuvA subunits (via domain III) on 2 adjacent RuvB subunits; this complex drives branch migration. In the full resolvosome a probable DNA-RuvA(4)-RuvB(12)-RuvC(2) complex forms which resolves the HJ.

The protein resides in the cytoplasm. The catalysed reaction is ATP + H2O = ADP + phosphate + H(+). In terms of biological role, the RuvA-RuvB-RuvC complex processes Holliday junction (HJ) DNA during genetic recombination and DNA repair, while the RuvA-RuvB complex plays an important role in the rescue of blocked DNA replication forks via replication fork reversal (RFR). RuvA specifically binds to HJ cruciform DNA, conferring on it an open structure. The RuvB hexamer acts as an ATP-dependent pump, pulling dsDNA into and through the RuvAB complex. RuvB forms 2 homohexamers on either side of HJ DNA bound by 1 or 2 RuvA tetramers; 4 subunits per hexamer contact DNA at a time. Coordinated motions by a converter formed by DNA-disengaged RuvB subunits stimulates ATP hydrolysis and nucleotide exchange. Immobilization of the converter enables RuvB to convert the ATP-contained energy into a lever motion, pulling 2 nucleotides of DNA out of the RuvA tetramer per ATP hydrolyzed, thus driving DNA branch migration. The RuvB motors rotate together with the DNA substrate, which together with the progressing nucleotide cycle form the mechanistic basis for DNA recombination by continuous HJ branch migration. Branch migration allows RuvC to scan DNA until it finds its consensus sequence, where it cleaves and resolves cruciform DNA. The sequence is that of Holliday junction branch migration complex subunit RuvB from Sodalis glossinidius (strain morsitans).